We begin with the raw amino-acid sequence, 127 residues long: Large ribosomal subunit protein uL24B (127 aa).

Belongs to the universal ribosomal protein uL24 family. In terms of assembly, component of the large ribosomal subunit (LSU). Mature yeast ribosomes consist of a small (40S) and a large (60S) subunit. The 40S small subunit contains 1 molecule of ribosomal RNA (18S rRNA) and 33 different proteins (encoded by 57 genes). The large 60S subunit contains 3 rRNA molecules (25S, 5.8S and 5S rRNA) and 46 different proteins (encoded by 81 genes).

The protein localises to the cytoplasm. Component of the ribosome, a large ribonucleoprotein complex responsible for the synthesis of proteins in the cell. The small ribosomal subunit (SSU) binds messenger RNAs (mRNAs) and translates the encoded message by selecting cognate aminoacyl-transfer RNA (tRNA) molecules. The large subunit (LSU) contains the ribosomal catalytic site termed the peptidyl transferase center (PTC), which catalyzes the formation of peptide bonds, thereby polymerizing the amino acids delivered by tRNAs into a polypeptide chain. The nascent polypeptides leave the ribosome through a tunnel in the LSU and interact with protein factors that function in enzymatic processing, targeting, and the membrane insertion of nascent chains at the exit of the ribosomal tunnel. This is Large ribosomal subunit protein uL24B from Saccharomyces cerevisiae (strain ATCC 204508 / S288c) (Baker's yeast).